Reading from the N-terminus, the 255-residue chain is Type III pantothenate kinase (255 aa).

An ATP-binding site is contributed by D6–V13. Residues Y100 and G107–R110 each bind substrate. D109 serves as the catalytic Proton acceptor. D129 serves as a coordination point for K(+). Residue T132 coordinates ATP. Residue T184 coordinates substrate.

The protein belongs to the type III pantothenate kinase family. As to quaternary structure, homodimer. It depends on NH4(+) as a cofactor. K(+) is required as a cofactor.

The protein localises to the cytoplasm. The enzyme catalyses (R)-pantothenate + ATP = (R)-4'-phosphopantothenate + ADP + H(+). It functions in the pathway cofactor biosynthesis; coenzyme A biosynthesis; CoA from (R)-pantothenate: step 1/5. Functionally, catalyzes the phosphorylation of pantothenate (Pan), the first step in CoA biosynthesis. The chain is Type III pantothenate kinase from Ruminiclostridium cellulolyticum (strain ATCC 35319 / DSM 5812 / JCM 6584 / H10) (Clostridium cellulolyticum).